A 447-amino-acid chain; its full sequence is Guanine nucleotide-binding protein alpha-1 subunit (447 aa).

The N-myristoyl glycine moiety is linked to residue Gly2. Residue Cys3 is the site of S-palmitoyl cysteine attachment. The G-alpha domain maps to 40–447 (NEVKLLLLGA…QQNLKKSGIL (408 aa)). Residues 43–56 (KLLLLGAGESGKST) form a G1 motif region. Positions 51, 52, 53, 54, 55, 56, 269, 275, 297, 363, 364, 366, and 419 each coordinate GTP. Ser55 is a Mg(2+) binding site. The G2 motif stretch occupies residues 267–275 (DILKGRIKT). Residue Thr275 participates in Mg(2+) binding. Positions 290–299 (FKVYDAGGQR) are G3 motif. A G4 motif region spans residues 359–366 (ILFLNKVD). Positions 417–422 (TCATDT) are G5 motif.

Belongs to the G-alpha family. As to quaternary structure, g proteins are composed of 3 units; alpha, beta and gamma. The alpha chain contains the guanine nucleotide binding site. The cofactor is Mg(2+).

Guanine nucleotide-binding proteins (G proteins) are involved as modulators or transducers in various transmembrane signaling systems. This protein is involved in the mating response pathway. This is Guanine nucleotide-binding protein alpha-1 subunit (GPA1) from Kluyveromyces lactis (strain ATCC 8585 / CBS 2359 / DSM 70799 / NBRC 1267 / NRRL Y-1140 / WM37) (Yeast).